Reading from the N-terminus, the 505-residue chain is 2,3-bisphosphoglycerate-independent phosphoglycerate mutase (505 aa).

The Mn(2+) site is built by D15 and S65. The Phosphoserine intermediate role is filled by S65. Residues H126, 156–157 (RD), R187, R193, 260–263 (RPDR), and K333 contribute to the substrate site. Residues D398, H402, D439, H440, and H457 each coordinate Mn(2+).

Belongs to the BPG-independent phosphoglycerate mutase family. As to quaternary structure, monomer. Mn(2+) serves as cofactor.

It catalyses the reaction (2R)-2-phosphoglycerate = (2R)-3-phosphoglycerate. Its pathway is carbohydrate degradation; glycolysis; pyruvate from D-glyceraldehyde 3-phosphate: step 3/5. In terms of biological role, catalyzes the interconversion of 2-phosphoglycerate and 3-phosphoglycerate. This Mycoplasmopsis pulmonis (strain UAB CTIP) (Mycoplasma pulmonis) protein is 2,3-bisphosphoglycerate-independent phosphoglycerate mutase.